We begin with the raw amino-acid sequence, 341 residues long: Platelet-activating factor receptor (341 aa).

Topologically, residues 1–16 (MEHNGSFRVDSEFRYT) are extracellular. The N-linked (GlcNAc...) asparagine glycan is linked to Asn-4. Residues 17–38 (LFPIVYSVIFILGVVANGYVLW) traverse the membrane as a helical segment. The Cytoplasmic segment spans residues 39–54 (VFANLYPSKKLNEIKI). Residues 55–74 (FMVNLTMADLLFLITLPLWI) form a helical membrane-spanning segment. Residues 75 to 91 (VYYYNEGDWILPNFLCN) lie on the Extracellular side of the membrane. The cysteines at positions 90 and 173 are disulfide-linked. Residues 92-113 (VAGCLFFINTYCSVAFLGVITY) form a helical membrane-spanning segment. Over 114 to 133 (NRYQAVAYPIKTAQATTRKR) the chain is Cytoplasmic. A helical membrane pass occupies residues 134-155 (GISLSLIIWVSIVATASYFLAT). At 156 to 184 (DSTNLVPNKDGSGNITRCFEHYEPYSVPI) the chain is on the extracellular side. N-linked (GlcNAc...) asparagine glycosylation is present at Asn-169. A helical transmembrane segment spans residues 185 to 205 (LVVHVFIAFCFFLVFFLIFYC). Residues 206-233 (NLVIIHTLLTQPMRQQRKAGVKRRALWM) are Cytoplasmic-facing. Residues 234 to 254 (VCTVLAVFIICFVPHHVVQLP) form a helical membrane-spanning segment. Topologically, residues 255–275 (WTLAELGYQTNFHQAINDAHQ) are extracellular. A helical transmembrane segment spans residues 276-295 (ITLCLLSTNCVLDPVIYCFL). Residues 296-341 (TKKFRKHLSEKFYSMRSSRKCSRATSDTCTEVIVPANQTPIVSLKN) are Cytoplasmic-facing.

Belongs to the G-protein coupled receptor 1 family. Interacts with ARRB1. In terms of tissue distribution, found in a range of organs. Expressed most strongly in spleen, followed by skeletal muscle, lung and small intestine. Expressed at moderate levels in the heart. Expressed at relatively low levels in the brain, liver and kidney.

It localises to the cell membrane. Receptor for platelet activating factor, a chemotactic phospholipid mediator that possesses potent inflammatory, smooth-muscle contractile and hypotensive activity. Seems to mediate its action via a G protein that activates a phosphatidylinositol-calcium second messenger system. The sequence is that of Platelet-activating factor receptor (Ptafr) from Mus musculus (Mouse).